We begin with the raw amino-acid sequence, 248 residues long: 4-hydroxy-tetrahydrodipicolinate reductase (248 aa).

NAD(+) is bound by residues 74–76 and 99–102; these read GTT and SANF. The active-site Proton donor/acceptor is the His134. His135 is a binding site for (S)-2,3,4,5-tetrahydrodipicolinate. Lys138 serves as the catalytic Proton donor. 144–145 provides a ligand contact to (S)-2,3,4,5-tetrahydrodipicolinate; sequence GT.

It belongs to the DapB family.

It localises to the cytoplasm. The enzyme catalyses (S)-2,3,4,5-tetrahydrodipicolinate + NAD(+) + H2O = (2S,4S)-4-hydroxy-2,3,4,5-tetrahydrodipicolinate + NADH + H(+). It catalyses the reaction (S)-2,3,4,5-tetrahydrodipicolinate + NADP(+) + H2O = (2S,4S)-4-hydroxy-2,3,4,5-tetrahydrodipicolinate + NADPH + H(+). The protein operates within amino-acid biosynthesis; L-lysine biosynthesis via DAP pathway; (S)-tetrahydrodipicolinate from L-aspartate: step 4/4. Its function is as follows. Catalyzes the conversion of 4-hydroxy-tetrahydrodipicolinate (HTPA) to tetrahydrodipicolinate. This is 4-hydroxy-tetrahydrodipicolinate reductase from Chlorobium phaeobacteroides (strain DSM 266 / SMG 266 / 2430).